A 350-amino-acid polypeptide reads, in one-letter code: 3-isopropylmalate dehydrogenase (350 aa).

NAD(+) is bound at residue 71–84 (GPKWADAPRHLRPE). Residues Arg-91, Arg-101, Arg-129, and Asp-220 each coordinate substrate. Asp-220, Asp-244, and Asp-248 together coordinate Mg(2+). 279-291 (GSAPDIAGKGLAN) provides a ligand contact to NAD(+).

Belongs to the isocitrate and isopropylmalate dehydrogenases family. LeuB type 1 subfamily. As to quaternary structure, homodimer. It depends on Mg(2+) as a cofactor. Mn(2+) serves as cofactor.

The protein localises to the cytoplasm. The enzyme catalyses (2R,3S)-3-isopropylmalate + NAD(+) = 4-methyl-2-oxopentanoate + CO2 + NADH. It functions in the pathway amino-acid biosynthesis; L-leucine biosynthesis; L-leucine from 3-methyl-2-oxobutanoate: step 3/4. Catalyzes the oxidation of 3-carboxy-2-hydroxy-4-methylpentanoate (3-isopropylmalate) to 3-carboxy-4-methyl-2-oxopentanoate. The product decarboxylates to 4-methyl-2 oxopentanoate. The sequence is that of 3-isopropylmalate dehydrogenase from Caulobacter vibrioides (strain ATCC 19089 / CIP 103742 / CB 15) (Caulobacter crescentus).